We begin with the raw amino-acid sequence, 151 residues long: RNA polymerase-binding transcription factor DksA (151 aa).

A coiled-coil region spans residues 33–54 (NEAQLAHFRRILEAWRNQLRDE). Residues C114, C117, C135, and C138 each contribute to the Zn(2+) site. A dksA C4-type zinc finger spans residues 114-138 (CESCGVEIGIRRLEARPTADLCIDC).

Belongs to the DksA family. In terms of assembly, interacts directly with the RNA polymerase.

It localises to the cytoplasm. Its function is as follows. Transcription factor that acts by binding directly to the RNA polymerase (RNAP). Required for negative regulation of rRNA expression and positive regulation of several amino acid biosynthesis promoters. Also required for regulation of fis expression. The sequence is that of RNA polymerase-binding transcription factor DksA from Escherichia coli O157:H7.